A 336-amino-acid chain; its full sequence is F420-dependent glucose-6-phosphate dehydrogenase (336 aa).

Asp-37 contributes to the coenzyme F420-(gamma-Glu)n binding site. The Proton donor role is filled by His-38. Residues Thr-74 and 105–106 (SG) contribute to the coenzyme F420-(gamma-Glu)n site. The active-site Proton acceptor is Glu-107. Coenzyme F420-(gamma-Glu)n contacts are provided by residues Asn-110, 173–174 (SG), and 176–177 (SA). Residues Thr-191, Lys-194, Lys-255, and Arg-279 each coordinate substrate.

The protein belongs to the F420-dependent glucose-6-phosphate dehydrogenase family. Homodimer.

It catalyses the reaction oxidized coenzyme F420-(gamma-L-Glu)(n) + D-glucose 6-phosphate + H(+) = 6-phospho-D-glucono-1,5-lactone + reduced coenzyme F420-(gamma-L-Glu)(n). Functionally, catalyzes the coenzyme F420-dependent oxidation of glucose 6-phosphate (G6P) to 6-phosphogluconolactone. The chain is F420-dependent glucose-6-phosphate dehydrogenase from Beutenbergia cavernae (strain ATCC BAA-8 / DSM 12333 / CCUG 43141 / JCM 11478 / NBRC 16432 / NCIMB 13614 / HKI 0122).